The chain runs to 317 residues: Ret finger protein-like 1 (317 aa).

An RING-type zinc finger spans residues cysteine 40 to serine 82. A B30.2/SPRY domain is found at glutamate 107–valine 301.

Phosphorylated by PKC and CDK1. The antiproliferative effect seems to be positively regulated by PKC phosphorylation and negatively by CDK1 phosphorylation. As to expression, seems to be expressed in prostate and less abundantly in adult brain, fetal liver, and fetal kidney.

The protein localises to the cytoplasm. The protein resides in the nucleus. Functionally, negatively regulates the G2-M phase transition, possibly by promoting cyclin B1/CCNB1 and CDK1 proteasomal degradation and thereby preventing their accumulation during interphase. The protein is Ret finger protein-like 1 (RFPL1) of Homo sapiens (Human).